We begin with the raw amino-acid sequence, 220 residues long: NADH-quinone oxidoreductase subunit I (220 aa).

2 4Fe-4S ferredoxin-type domains span residues 71 to 102 (LQRLLDSGSERCIGCGLCEKICTSNCIRIITH) and 112 to 141 (DSYTINLGRCIYCGLCAEVCPELAIVMGNR). [4Fe-4S] cluster is bound by residues C82, C85, C88, C92, C121, C124, C127, and C131. Positions 187 to 220 (MQATPLDYVQEPSKEESKEETPTNPESNKGDENV) are disordered. Over residues 198–207 (PSKEESKEET) the composition is skewed to basic and acidic residues.

This sequence belongs to the complex I 23 kDa subunit family. As to quaternary structure, NDH-1 is composed of 14 different subunits. Subunits NuoA, H, J, K, L, M, N constitute the membrane sector of the complex. It depends on [4Fe-4S] cluster as a cofactor.

It localises to the cell inner membrane. The enzyme catalyses a quinone + NADH + 5 H(+)(in) = a quinol + NAD(+) + 4 H(+)(out). NDH-1 shuttles electrons from NADH, via FMN and iron-sulfur (Fe-S) centers, to quinones in the respiratory chain. The immediate electron acceptor for the enzyme in this species is believed to be ubiquinone. Couples the redox reaction to proton translocation (for every two electrons transferred, four hydrogen ions are translocated across the cytoplasmic membrane), and thus conserves the redox energy in a proton gradient. This is NADH-quinone oxidoreductase subunit I from Helicobacter pylori (strain HPAG1).